We begin with the raw amino-acid sequence, 230 residues long: Thymidylate kinase (230 aa).

Residue 20–27 (GGEGAGKS) coordinates ATP.

It belongs to the thymidylate kinase family.

The catalysed reaction is dTMP + ATP = dTDP + ADP. Its function is as follows. Phosphorylation of dTMP to form dTDP in both de novo and salvage pathways of dTTP synthesis. This chain is Thymidylate kinase, found in Rhodopseudomonas palustris (strain ATCC BAA-98 / CGA009).